Here is a 448-residue protein sequence, read N- to C-terminus: 5-hydroxytryptamine receptor 7 (448 aa).

Over 1 to 86 (MMDVNSSGRP…INYGRVEKVV (86 aa)) the chain is Extracellular. 2 N-linked (GlcNAc...) asparagine glycosylation sites follow: N5 and N69. A helical membrane pass occupies residues 87–111 (IGSILTLITLLTIAGNCLVVISVCF). Residues 112–121 (VKKLRQPSNY) lie on the Cytoplasmic side of the membrane. The chain crosses the membrane as a helical span at residues 122-143 (LIVSLALADLSVAVAVMPFVSV). The Extracellular portion of the chain corresponds to 144 to 155 (TDLIGGKWIFGH). The chain crosses the membrane as a helical span at residues 156–181 (FFCNVFIAMDVMCCTASIMTLCVISI). C158 and C234 are oxidised to a cystine. D165 contacts serotonin. Topologically, residues 182–201 (DRYLGITRPLTYPVRQNGKC) are cytoplasmic. Residues 202–222 (MAKMILSVWLLSASITLPPLF) form a helical membrane-spanning segment. The Extracellular portion of the chain corresponds to 223–240 (GWAQNVNDDKVCLISQDF). The chain crosses the membrane as a helical span at residues 241–263 (GYTIYSTAVAFYIPMSVMLFMYY). The Cytoplasmic segment spans residues 264 to 329 (QIYKAARKSA…SIFKREQKAA (66 aa)). Residues 330–355 (TTLGIIVGAFTVCWLPFFLLSTARPF) form a helical membrane-spanning segment. Residues 356–366 (ICGTSCSCIPL) are Extracellular-facing. The helical transmembrane segment at 367 to 390 (WVERTCLWLGYANSLINPFIYAFF) threads the bilayer. Over 391-448 (NRDLRTTYRSLLQCQYRNINRKLSAAGMHEALKLAERPERSEFVLQNCDHCGKKGHDT) the chain is Cytoplasmic. C404 is lipidated: S-palmitoyl cysteine.

Belongs to the G-protein coupled receptor 1 family.

It localises to the cell membrane. In terms of biological role, G-protein coupled receptor for 5-hydroxytryptamine (serotonin), a biogenic hormone that functions as a neurotransmitter, a hormone and a mitogen. Ligand binding causes a conformation change that triggers signaling via guanine nucleotide-binding proteins (G proteins) and modulates the activity of downstream effectors. HTR7 is coupled to G(s) G alpha proteins and mediates activation of adenylate cyclase activity. In Mus musculus (Mouse), this protein is 5-hydroxytryptamine receptor 7 (Htr7).